Consider the following 220-residue polypeptide: DNA mismatch repair protein MutH (220 aa).

This sequence belongs to the MutH family.

Its subcellular location is the cytoplasm. In terms of biological role, sequence-specific endonuclease that cleaves unmethylated GATC sequences. It is involved in DNA mismatch repair. The protein is DNA mismatch repair protein MutH of Buchnera aphidicola subsp. Baizongia pistaciae (strain Bp).